A 481-amino-acid chain; its full sequence is MKIIKGKKCDWEMIIGLEVHAQVISNSKLFSGASAKTYDSLPNTQVSLFDVAMPGMLPLLNQYCISQAVKTGLALSCKINNYSAFDRKNYFYPDLPSGYQITQFYYPIATDGKVVLEESNDKEVRITRIHLEQDAGKSIHEYGKTYVDFNRAGVALMEIVSEPDLRSTDEVAEYLKKLRMILRFIGTCDGDMEKGSFRCDANVSVRPLGSDKLGIRSEIKNLNSIRYVVQAIEYEANKQVMALENGEELIQNTLLFDVILGETRVIRNKEDAHDYRYFPDPDLFSLEIDDQYISEVKLSLPELPMQKRDRYIRDFKLNKYDADILVADRDVAAYFEEVVQKHDAKLAASWIVCDLFARLNKLGISINESAVKAGDMIQLLDLIVDKTISGKIAKQVFAIMFESGKSPISIVNEYGLKQLDDSDSVSMIVENVLENNKDKVLQYKQGKEKLFGYFVGQVMKETQGKANPELVNSIIKEKLQE.

This sequence belongs to the GatB/GatE family. GatB subfamily. In terms of assembly, heterotrimer of A, B and C subunits.

It carries out the reaction L-glutamyl-tRNA(Gln) + L-glutamine + ATP + H2O = L-glutaminyl-tRNA(Gln) + L-glutamate + ADP + phosphate + H(+). The catalysed reaction is L-aspartyl-tRNA(Asn) + L-glutamine + ATP + H2O = L-asparaginyl-tRNA(Asn) + L-glutamate + ADP + phosphate + 2 H(+). Allows the formation of correctly charged Asn-tRNA(Asn) or Gln-tRNA(Gln) through the transamidation of misacylated Asp-tRNA(Asn) or Glu-tRNA(Gln) in organisms which lack either or both of asparaginyl-tRNA or glutaminyl-tRNA synthetases. The reaction takes place in the presence of glutamine and ATP through an activated phospho-Asp-tRNA(Asn) or phospho-Glu-tRNA(Gln). The sequence is that of Aspartyl/glutamyl-tRNA(Asn/Gln) amidotransferase subunit B from Ehrlichia ruminantium (strain Gardel).